Here is a 214-residue protein sequence, read N- to C-terminus: EEF1A lysine methyltransferase 1 (214 aa).

Ser-2 is modified (N-acetylserine). At Ser-2 the chain carries Phosphoserine.

The protein belongs to the class I-like SAM-binding methyltransferase superfamily. EFM5 family.

The protein localises to the cytoplasm. It catalyses the reaction L-lysyl-[protein] + 3 S-adenosyl-L-methionine = N(6),N(6),N(6)-trimethyl-L-lysyl-[protein] + 3 S-adenosyl-L-homocysteine + 3 H(+). In terms of biological role, protein N-lysine methyltransferase that selectively catalyzes the trimethylation of EEF1A at 'Lys-79'. This Homo sapiens (Human) protein is EEF1A lysine methyltransferase 1.